Here is a 716-residue protein sequence, read N- to C-terminus: DNA ligase (716 aa).

NAD(+)-binding positions include 49 to 53 (DAAYD), 98 to 99 (SL), and glutamate 132. Residue lysine 134 is the N6-AMP-lysine intermediate of the active site. NAD(+)-binding residues include arginine 155, glutamate 192, lysine 308, and lysine 332. 4 residues coordinate Zn(2+): cysteine 437, cysteine 439, cysteine 461, and cysteine 467. In terms of domain architecture, BRCT spans 638–716 (KRNSPIATKT…EDEWLQLIGE (79 aa)).

It belongs to the NAD-dependent DNA ligase family. LigA subfamily. The cofactor is Mg(2+). It depends on Mn(2+) as a cofactor.

The catalysed reaction is NAD(+) + (deoxyribonucleotide)n-3'-hydroxyl + 5'-phospho-(deoxyribonucleotide)m = (deoxyribonucleotide)n+m + AMP + beta-nicotinamide D-nucleotide.. Its function is as follows. DNA ligase that catalyzes the formation of phosphodiester linkages between 5'-phosphoryl and 3'-hydroxyl groups in double-stranded DNA using NAD as a coenzyme and as the energy source for the reaction. It is essential for DNA replication and repair of damaged DNA. The chain is DNA ligase from Bradyrhizobium sp. (strain ORS 278).